The sequence spans 741 residues: Catalase-peroxidase 2 (741 aa).

An N-terminal signal peptide occupies residues 1–28 (MQRNRIAKSVLAALAVIAMSAGSISARA). The segment at residues 107-228 (WHGAGTYRTY…LAATQMGLIY (122 aa)) is a cross-link (tryptophyl-tyrosyl-methioninium (Trp-Tyr) (with M-254)). Residue histidine 108 is the Proton acceptor of the active site. The tryptophyl-tyrosyl-methioninium (Tyr-Met) (with W-107) cross-link spans 228 to 254 (YVNPEGPNGNPDPVAAAQDIREAFGRM). Histidine 269 contacts heme b.

The protein belongs to the peroxidase family. Peroxidase/catalase subfamily. As to quaternary structure, homodimer or homotetramer. Heme b is required as a cofactor. Formation of the three residue Trp-Tyr-Met cross-link is important for the catalase, but not the peroxidase activity of the enzyme.

It carries out the reaction H2O2 + AH2 = A + 2 H2O. The catalysed reaction is 2 H2O2 = O2 + 2 H2O. In terms of biological role, bifunctional enzyme with both catalase and broad-spectrum peroxidase activity. This is Catalase-peroxidase 2 from Burkholderia vietnamiensis (strain G4 / LMG 22486) (Burkholderia cepacia (strain R1808)).